We begin with the raw amino-acid sequence, 146 residues long: Deoxyuridine 5'-triphosphate nucleotidohydrolase (146 aa).

Residues 65–67 (RSG), N78, and 82–84 (TID) contribute to the substrate site.

This sequence belongs to the dUTPase family. Requires Mg(2+) as cofactor.

The enzyme catalyses dUTP + H2O = dUMP + diphosphate + H(+). It functions in the pathway pyrimidine metabolism; dUMP biosynthesis; dUMP from dCTP (dUTP route): step 2/2. Functionally, this enzyme is involved in nucleotide metabolism: it produces dUMP, the immediate precursor of thymidine nucleotides and it decreases the intracellular concentration of dUTP so that uracil cannot be incorporated into DNA. The sequence is that of Deoxyuridine 5'-triphosphate nucleotidohydrolase from Treponema pallidum subsp. pallidum (strain SS14).